The following is a 156-amino-acid chain: Probable chemoreceptor glutamine deamidase CheD (156 aa).

It belongs to the CheD family.

The enzyme catalyses L-glutaminyl-[protein] + H2O = L-glutamyl-[protein] + NH4(+). Functionally, probably deamidates glutamine residues to glutamate on methyl-accepting chemotaxis receptors (MCPs), playing an important role in chemotaxis. The polypeptide is Probable chemoreceptor glutamine deamidase CheD (Sulfurimonas denitrificans (strain ATCC 33889 / DSM 1251) (Thiomicrospira denitrificans (strain ATCC 33889 / DSM 1251))).